The following is a 317-amino-acid chain: Insulin-like growth factor-binding protein 2 (317 aa).

The N-terminal stretch at 1–33 (MQPRLGGPALLLLPPLLLLLLLGAGGGDCGARA) is a signal peptide. Residues 35 to 126 (VLFRCPPCTP…VHGEGTCEKH (92 aa)) form the IGFBP N-terminal domain. Intrachain disulfides connect C39/C76, C42/C78, C50/C79, C68/C82, C90/C103, and C97/C123. 2 disordered regions span residues 125-151 (KHGDAEYSASPEQVADNGEEHSEGGQV) and 189-218 (EQHRQMGKGGKHHLGLEEPKKLRPPPARTP). The 83-residue stretch at 216 to 298 (RTPCQQELDQ…APTIRGDPEC (83 aa)) folds into the Thyroglobulin type-1 domain. 3 cysteine pairs are disulfide-bonded: C219-C253, C264-C275, and C277-C298. The Cell attachment site signature appears at 293 to 295 (RGD).

Interacts with IGF1. Interacts with IGF2. Interacts (via RGD motif) with integrin alpha5/ITGA5; this interaction induces cell migration, adhesion or apoptosis according to the context. Interacts with PTPRB; this interaction leads to PTPRB dimerization and inactivation. Post-translationally, cleaved by MMP9 leading to release of free IGF2 from IGFBP2-IGF2 complex, which contributes to enhance the motility and the growth of astrocytes. O-glycosylated. In terms of tissue distribution, expressed in abundance in selected adult tissues, namely liver, kidney, adrenal, pituitary and choroid plexus.

It localises to the secreted. Its function is as follows. Multifunctional protein that plays a critical role in regulating the availability of IGFs such as IGF1 and IGF2 to their receptors and thereby regulates IGF-mediated cellular processes including proliferation, differentiation, and apoptosis in a cell-type specific manner. Functions coordinately with receptor protein tyrosine phosphatase beta/PTPRB and the IGF1 receptor to regulate IGF1-mediated signaling by stimulating the phosphorylation of PTEN leading to its inactivation and AKT1 activation. Plays a positive role in cell migration via interaction with integrin alpha5/ITGA5 through an RGD motif. Additionally, interaction with ITGA5/ITGB1 enhances the adhesion of endothelial progenitor cells to endothelial cells. Upon mitochondrial damage, facilitates apoptosis with ITGA5 of podocytes, and then activates the phosphorylation of focal adhesion kinase (FAK)-mediated mitochondrial injury. This chain is Insulin-like growth factor-binding protein 2 (IGFBP2), found in Ovis aries (Sheep).